Reading from the N-terminus, the 206-residue chain is Guanylate kinase (206 aa).

The Guanylate kinase-like domain occupies 6–185 (GAILVLSGPS…AAKTLRIIAD (180 aa)). Residue 13-20 (GPSGAGKS) participates in ATP binding.

Belongs to the guanylate kinase family.

The protein resides in the cytoplasm. It catalyses the reaction GMP + ATP = GDP + ADP. In terms of biological role, essential for recycling GMP and indirectly, cGMP. The polypeptide is Guanylate kinase (Sulfurimonas denitrificans (strain ATCC 33889 / DSM 1251) (Thiomicrospira denitrificans (strain ATCC 33889 / DSM 1251))).